The primary structure comprises 162 residues: MATSKCYYPRPSHRFFTTDQHVTATSDFELDEWDLFNTGSDSSSSFSFSDLTITSGRTGTNRQIHGGSDSGKAASSLPVNVPDWSKILGDESRRQRKISNEEEVDGDEILCGEGTRRVPPHELLANRRMASFSVHEGAGRTLKGRDLSRVRNTIFKIRGIED.

The protein belongs to the senescence regulator S40 family.

The protein resides in the cytoplasm. In Arabidopsis thaliana (Mouse-ear cress), this protein is Protein S40-4.